The following is a 494-amino-acid chain: Sugar phosphate exchanger 3 (494 aa).

A helical membrane pass occupies residues 16 to 36 (FSHHHVVVFLLTFFSYSLLHA). N-linked (GlcNAc...) asparagine glycosylation is present at asparagine 58. 5 consecutive transmembrane segments (helical) span residues 81–101 (TLFLGTLDTIFLFSYAVGLFI), 113–133 (WVLSFGMCSSALVVFVFGALT), 147–167 (LWIVNGLLQSTGWPCVVAVMG), 177–197 (VVFGLWSACASVGNILGACLA), and 209–229 (FLVTASVQFAGGIVIFFGLLV). Asparagine 266 carries an N-linked (GlcNAc...) asparagine glycan. Helical transmembrane passes span 297–317 (LAYACLKLVNYSFFFWLPFYL), 333–353 (IWYDVGGIIGGTLQGFISDVL), 357–377 (APVLALSLLLAVGSLIGYSRS), 386–406 (LLMTVTGFFIGGPSNMISSAI), 428–448 (GIVDGSGSIGAAVGQYLVSLI), and 452–472 (LGWMWVFYFFILMTSCTIVFI).

Belongs to the major facilitator superfamily. Organophosphate:Pi antiporter (OPA) (TC 2.A.1.4) family. In terms of assembly, interacts with ATRAID; the interaction is direct and both proteins are mutually dependent for their stability. In terms of processing, glycosylated. In terms of tissue distribution, expressed in liver, kidney, intestine and pancreas.

It localises to the endoplasmic reticulum membrane. The protein resides in the lysosome membrane. Unlike the other SLC37 members, lacks glucose-6-phosphate antiporter activity. In osteoclasts, forms a transporter complex with ATRAID for nitrogen-containing-bisphophonates (N-BPs) required for releasing N-BP molecules that have trafficked to lysosomes through fluid-phase endocytosis into the cytosol. The polypeptide is Sugar phosphate exchanger 3 (Homo sapiens (Human)).